A 245-amino-acid chain; its full sequence is UDP-N-acetyl-D-mannosaminuronic acid transferase (245 aa).

Belongs to the glycosyltransferase 26 family.

It catalyses the reaction UDP-N-acetyl-alpha-D-mannosaminouronate + N-acetyl-alpha-D-glucosaminyl-di-trans,octa-cis-undecaprenyl diphosphate = beta-D-ManNAcA-(1-&gt;4)-alpha-D-GlcNAc-di-trans,octa-cis-undecaprenyl diphosphate + UDP + H(+). It participates in bacterial outer membrane biogenesis; enterobacterial common antigen biosynthesis. Catalyzes the synthesis of Und-PP-GlcNAc-ManNAcA (Lipid II), the second lipid-linked intermediate involved in enterobacterial common antigen (ECA) synthesis. The protein is UDP-N-acetyl-D-mannosaminuronic acid transferase of Proteus mirabilis (strain HI4320).